The sequence spans 81 residues: Protein RADIALIS-like 3 (81 aa).

The 56-residue stretch at 7-62 (SSSASWTRKENKLFERALATYDQDTPDRWHNVARAVGGKSAEEVRRHYELLIRDVN) folds into the SANT domain.

Expressed just outside the vascular bundles in the rosette stem and the leaf traces. Not detected in floral primordia.

The protein resides in the nucleus. Its function is as follows. Probable transcription factor. The protein is Protein RADIALIS-like 3 (RL3) of Arabidopsis thaliana (Mouse-ear cress).